Reading from the N-terminus, the 498-residue chain is ATP synthase subunit beta, chloroplastic (498 aa).

172-179 contacts ATP; the sequence is GGAGVGKT.

Belongs to the ATPase alpha/beta chains family. In terms of assembly, F-type ATPases have 2 components, CF(1) - the catalytic core - and CF(0) - the membrane proton channel. CF(1) has five subunits: alpha(3), beta(3), gamma(1), delta(1), epsilon(1). CF(0) has four main subunits: a(1), b(1), b'(1) and c(9-12).

It is found in the plastid. It localises to the chloroplast thylakoid membrane. The enzyme catalyses ATP + H2O + 4 H(+)(in) = ADP + phosphate + 5 H(+)(out). Its function is as follows. Produces ATP from ADP in the presence of a proton gradient across the membrane. The catalytic sites are hosted primarily by the beta subunits. The protein is ATP synthase subunit beta, chloroplastic of Populus tremuloides (Quaking aspen).